A 664-amino-acid polypeptide reads, in one-letter code: Chaperone protein dnaK1 (664 aa).

A Phosphothreonine; by autocatalysis modification is found at Thr198.

It belongs to the heat shock protein 70 family.

Its function is as follows. Acts as a chaperone. The polypeptide is Chaperone protein dnaK1 (dnaK1) (Prochlorococcus marinus (strain MIT 9313)).